We begin with the raw amino-acid sequence, 149 residues long: D-aminoacyl-tRNA deacylase (149 aa).

Positions 137–138 (GP) match the Gly-cisPro motif, important for rejection of L-amino acids motif.

This sequence belongs to the DTD family. As to quaternary structure, homodimer.

It is found in the cytoplasm. The catalysed reaction is glycyl-tRNA(Ala) + H2O = tRNA(Ala) + glycine + H(+). It catalyses the reaction a D-aminoacyl-tRNA + H2O = a tRNA + a D-alpha-amino acid + H(+). Functionally, an aminoacyl-tRNA editing enzyme that deacylates mischarged D-aminoacyl-tRNAs. Also deacylates mischarged glycyl-tRNA(Ala), protecting cells against glycine mischarging by AlaRS. Acts via tRNA-based rather than protein-based catalysis; rejects L-amino acids rather than detecting D-amino acids in the active site. By recycling D-aminoacyl-tRNA to D-amino acids and free tRNA molecules, this enzyme counteracts the toxicity associated with the formation of D-aminoacyl-tRNA entities in vivo and helps enforce protein L-homochirality. The polypeptide is D-aminoacyl-tRNA deacylase (Anaeromyxobacter dehalogenans (strain 2CP-C)).